The chain runs to 709 residues: Polyribonucleotide nucleotidyltransferase (709 aa).

Mg(2+) is bound by residues Asp-486 and Asp-492. Residues 553-612 (PRIHTIKINADKIKDVIGKGGSVIRALTEETGTTIEIEDDGTVKIAATSGEQAKQAIARI) enclose the KH domain. Positions 622 to 690 (GRIYNGKVTR…RQGRIRLSMK (69 aa)) constitute an S1 motif domain. Residues 690 to 709 (KEAQATQQEAAETSSEDPAN) form a disordered region. Positions 691–702 (EAQATQQEAAET) are enriched in low complexity.

This sequence belongs to the polyribonucleotide nucleotidyltransferase family. As to quaternary structure, component of the RNA degradosome, which is a multiprotein complex involved in RNA processing and mRNA degradation. Requires Mg(2+) as cofactor.

The protein resides in the cytoplasm. The catalysed reaction is RNA(n+1) + phosphate = RNA(n) + a ribonucleoside 5'-diphosphate. In terms of biological role, involved in mRNA degradation. Catalyzes the phosphorolysis of single-stranded polyribonucleotides processively in the 3'- to 5'-direction. This Proteus mirabilis (strain HI4320) protein is Polyribonucleotide nucleotidyltransferase.